A 149-amino-acid polypeptide reads, in one-letter code: Arginine repressor (149 aa).

This sequence belongs to the ArgR family.

It is found in the cytoplasm. It participates in amino-acid biosynthesis; L-arginine biosynthesis [regulation]. Functionally, regulates arginine biosynthesis genes. The sequence is that of Arginine repressor from Geobacillus kaustophilus (strain HTA426).